A 272-amino-acid chain; its full sequence is METYAVFGNPIAHSKSPFIHQQFAQQLNIEHPYGRVLAPINDFINTLNAFFRAGGKGANVTVPFKEEAFARADELTERAALSGAVNTLKRLEDGRLLGDNTDGVGLLSDLERLSFIRPGLRILLIGAGGASRGVLLPLLSLDCAVTITNRTVSRAEELAKLFAHTGSIQALGMDELEGHEFDLIINATSSGISGDIPAIPSSLIHPGIYCYDMFYQKGKTPFLAWCEQRGSKRNADGLGMLVAQAAHAFLLWHGVLPDVEPVIKQLQEELSA.

Shikimate contacts are provided by residues 14–16 (SKS) and threonine 61. The active-site Proton acceptor is the lysine 65. Glutamate 77 is an NADP(+) binding site. Shikimate contacts are provided by asparagine 86 and aspartate 102. Residues 126–130 (GAGGA), 149–154 (NRTVSR), and methionine 213 contribute to the NADP(+) site. Tyrosine 215 serves as a coordination point for shikimate. Glycine 237 provides a ligand contact to NADP(+).

It belongs to the shikimate dehydrogenase family. As to quaternary structure, homodimer.

The catalysed reaction is shikimate + NADP(+) = 3-dehydroshikimate + NADPH + H(+). It participates in metabolic intermediate biosynthesis; chorismate biosynthesis; chorismate from D-erythrose 4-phosphate and phosphoenolpyruvate: step 4/7. Its function is as follows. Involved in the biosynthesis of the chorismate, which leads to the biosynthesis of aromatic amino acids. Catalyzes the reversible NADPH linked reduction of 3-dehydroshikimate (DHSA) to yield shikimate (SA). The sequence is that of Shikimate dehydrogenase (NADP(+)) from Shigella flexneri serotype 5b (strain 8401).